The sequence spans 686 residues: Forkhead box protein P1 (686 aa).

Composition is skewed to polar residues over residues 1 to 19 and 279 to 292; these read MMQESGTETKSNGSAIQNG and IINPHASTNGQLSV. 2 disordered regions span residues 1 to 23 and 279 to 306; these read MMQESGTETKSNGSAIQNGASGG and IINPHASTNGQLSVHTPKRESLSHEEHS. A compositionally biased stretch (basic and acidic residues) spans 295–306; that stretch reads PKRESLSHEEHS. The segment at 315-340 adopts a C2H2-type zinc-finger fold; the sequence is GVCKWPGCEAVCEDFQSFLKHLNSEH. Positions 357 to 378 are leucine-zipper; sequence VQQLELQLAKDKERLQAMMTHL. The segment at 391–395 is CTBP1-binding; that stretch reads PLNLV. Residues 403–412 show a composition bias toward polar residues; sequence TASEASPQSL. The disordered stretch occupies residues 403–440; the sequence is TASEASPQSLPHTPTTPTAPITPVTQGPSVITTTSMHN. Residues 413 to 427 are compositionally biased toward low complexity; sequence PHTPTTPTAPITPVT. Over residues 428-439 the composition is skewed to polar residues; that stretch reads QGPSVITTTSMH. The segment at residues 474 to 564 is a DNA-binding region (fork-head); sequence RPPFTYASLI…PQKISGNPSL (91 aa). The disordered stretch occupies residues 619–686; it reads MEHTNSNGSD…EDEPVNEDIE (68 aa). Positions 621-632 are enriched in polar residues; sequence HTNSNGSDSSPG. The segment covering 676–686 has biased composition (acidic residues); sequence YEDEPVNEDIE.

The protein resides in the nucleus. Its function is as follows. Transcriptional repressor. The polypeptide is Forkhead box protein P1 (FOXP1) (Gallus gallus (Chicken)).